Consider the following 814-residue polypeptide: Valine--tRNA ligase (814 aa).

A 'HIGH' region motif is present at residues 46–56 (PTVSGQLHIGH). The 'KMSKS' region motif lies at 536 to 540 (KMSKS). Residue Lys539 coordinates ATP.

This sequence belongs to the class-I aminoacyl-tRNA synthetase family. ValS type 2 subfamily. Monomer.

Its subcellular location is the cytoplasm. The enzyme catalyses tRNA(Val) + L-valine + ATP = L-valyl-tRNA(Val) + AMP + diphosphate. In terms of biological role, catalyzes the attachment of valine to tRNA(Val). As ValRS can inadvertently accommodate and process structurally similar amino acids such as threonine, to avoid such errors, it has a 'posttransfer' editing activity that hydrolyzes mischarged Thr-tRNA(Val) in a tRNA-dependent manner. The chain is Valine--tRNA ligase from Rickettsia prowazekii (strain Madrid E).